The following is a 473-amino-acid chain: Glutamyl-tRNA reductase (473 aa).

Substrate contacts are provided by residues 49–52 (TCNR), Ser109, 114–116 (EQQ), and Gln120. Cys50 acts as the Nucleophile in catalysis. 189-194 (GAGSMG) is an NADP(+) binding site. Positions 445–473 (SGLDAGSGPQGADGPSAGPTPSAPNPSAE) are disordered.

It belongs to the glutamyl-tRNA reductase family. In terms of assembly, homodimer.

The enzyme catalyses (S)-4-amino-5-oxopentanoate + tRNA(Glu) + NADP(+) = L-glutamyl-tRNA(Glu) + NADPH + H(+). Its pathway is porphyrin-containing compound metabolism; protoporphyrin-IX biosynthesis; 5-aminolevulinate from L-glutamyl-tRNA(Glu): step 1/2. Catalyzes the NADPH-dependent reduction of glutamyl-tRNA(Glu) to glutamate 1-semialdehyde (GSA). This Mycobacterium ulcerans (strain Agy99) protein is Glutamyl-tRNA reductase.